A 404-amino-acid chain; its full sequence is Caspase b (404 aa).

Positions Met-1–Gln-171 are excised as a propeptide. Residues Leu-8–Ala-80 form the Pyrin domain. Catalysis depends on residues His-249 and Cys-296. The propeptide occupies Ser-301–Trp-316.

This sequence belongs to the peptidase C14A family. In terms of assembly, upon direct LPS-binding, forms large homooligomers, resulting in its activation. These oligomers are often referred to as 'non-canonical inflammasomes'. Heterotetramer that consists of two anti-parallel arranged heterodimers, each one formed by a 20 kDa (p20) and a 10 kDa (p10) subunit. Interacts with caspa. Interacts with pycard; the interaction only occurs in the presence of nlrp1. Component of NLRP1 inflammasomes. Inflammasomes are supramolecular complexes that assemble in the cytosol in response to pathogens and other damage-associated signals and play critical roles in innate immunity and inflammation. The NLRP1 inflammasome is composed of the signal sensor nlrp1, and the adapter pycard (asc), which recruit effector pro-inflammatory caspases caspa and/or caspb. The interaction between nlrp1 and pycard is required for the sequential recruitment of caspa and then caspb. Caspa is preferentially recruited first and this causes the cleavage of pro-il1b into the midformed il1b. This is followed by the recruitment of caspb, which is activated and cleaves the midformed il1b resulting in il1b maturation. Post-translationally, the two subunits are derived from the precursor sequence by an autocatalytic mechanism. Expressed in the spleen, kidney and liver, and highly expressed in the gills and gut.

It is found in the inflammasome. It localises to the cytoplasm. The enzyme catalyses Strict requirement for Asp at the P1 position. It has a preferred cleavage sequence of Tyr-Val-Ala-Asp-|- but also cleaves at Asp-Glu-Val-Asp-|-.. Activated by homooligomerization induced by direct binding to cytosolic LPS. Functionally, thiol protease which cleaves IL-1 beta (il1b), releasing the mature cytokine which is involved in a variety of inflammatory processes, and mediates apoptosis. Component of the NLRP1 inflammasome, which plays a crucial role in innate immunity and inflammation. In response to pathogens and other damage-associated signals, recruited to the NLRP1 inflammasome in its precursor form following the recruitment of caspase caspa. Its subsequent activation causes the cleavage of the midformed pro-il1b and results in il1b maturation and secretion in the extracellular milieu. Activated by direct binding to bacterial lipopolysaccharides (LPS), which causes non-canonical inflammasome activation and results in the pyroptosis of infected cells and their extrusion into the gut lumen, as well as in cytokine secretion. Plays a crucial role in the restriction of bacterial infection to intestinal sites. Pyroptosis limits bacterial replication, while cytokine secretion promotes the recruitment and activation of immune cells and triggers mucosal inflammation. Promotes pyroptosis by bacterial infection by E.piscicida. The sequence is that of Caspase b from Danio rerio (Zebrafish).